Consider the following 379-residue polypeptide: Cobalt-precorrin-5B C(1)-methyltransferase (379 aa).

The protein belongs to the CbiD family.

It carries out the reaction Co-precorrin-5B + S-adenosyl-L-methionine = Co-precorrin-6A + S-adenosyl-L-homocysteine. Its pathway is cofactor biosynthesis; adenosylcobalamin biosynthesis; cob(II)yrinate a,c-diamide from sirohydrochlorin (anaerobic route): step 6/10. Catalyzes the methylation of C-1 in cobalt-precorrin-5B to form cobalt-precorrin-6A. In Salmonella heidelberg (strain SL476), this protein is Cobalt-precorrin-5B C(1)-methyltransferase.